A 308-amino-acid chain; its full sequence is Ornithine carbamoyltransferase (308 aa).

Carbamoyl phosphate contacts are provided by residues 55 to 58 (STRT), Q82, R106, and 133 to 136 (HPCQ). L-ornithine contacts are provided by residues N164, D227, and 231-232 (SM). Carbamoyl phosphate contacts are provided by residues 267–268 (CL) and R295.

Belongs to the aspartate/ornithine carbamoyltransferase superfamily. OTCase family.

It localises to the cytoplasm. The catalysed reaction is carbamoyl phosphate + L-ornithine = L-citrulline + phosphate + H(+). Its pathway is amino-acid biosynthesis; L-arginine biosynthesis; L-arginine from L-ornithine and carbamoyl phosphate: step 1/3. In terms of biological role, reversibly catalyzes the transfer of the carbamoyl group from carbamoyl phosphate (CP) to the N(epsilon) atom of ornithine (ORN) to produce L-citrulline. The protein is Ornithine carbamoyltransferase of Prochlorococcus marinus subsp. pastoris (strain CCMP1986 / NIES-2087 / MED4).